The primary structure comprises 971 residues: UPF0182 protein RER_22310 (971 aa).

A run of 7 helical transmembrane segments spans residues 16–36 (ILLV…RLIG), 61–81 (FVLF…AMLL), 112–132 (LFGV…AQAN), 172–192 (WLFV…YVFG), 209–229 (VQLA…YWFD), 257–277 (AKLI…ASIF), and 286–306 (MAVA…PMIV). A disordered region spans residues 890 to 927 (GSAATVTQPAPDPDTGAQPETPTTPTAPAPPASSDDVT).

This sequence belongs to the UPF0182 family.

The protein localises to the cell membrane. The chain is UPF0182 protein RER_22310 from Rhodococcus erythropolis (strain PR4 / NBRC 100887).